Consider the following 167-residue polypeptide: 2-C-methyl-D-erythritol 2,4-cyclodiphosphate synthase (167 aa).

A divalent metal cation contacts are provided by Asp11 and His13. 4-CDP-2-C-methyl-D-erythritol 2-phosphate contacts are provided by residues 11 to 13 (DIH) and 37 to 38 (HS). His45 serves as a coordination point for a divalent metal cation. 4-CDP-2-C-methyl-D-erythritol 2-phosphate contacts are provided by residues 59–61 (DIG), 64–68 (FSDTD), 103–109 (AQAPKMA), and Arg145.

It belongs to the IspF family. As to quaternary structure, homotrimer. Requires a divalent metal cation as cofactor.

It catalyses the reaction 4-CDP-2-C-methyl-D-erythritol 2-phosphate = 2-C-methyl-D-erythritol 2,4-cyclic diphosphate + CMP. Its pathway is isoprenoid biosynthesis; isopentenyl diphosphate biosynthesis via DXP pathway; isopentenyl diphosphate from 1-deoxy-D-xylulose 5-phosphate: step 4/6. Its function is as follows. Involved in the biosynthesis of isopentenyl diphosphate (IPP) and dimethylallyl diphosphate (DMAPP), two major building blocks of isoprenoid compounds. Catalyzes the conversion of 4-diphosphocytidyl-2-C-methyl-D-erythritol 2-phosphate (CDP-ME2P) to 2-C-methyl-D-erythritol 2,4-cyclodiphosphate (ME-CPP) with a corresponding release of cytidine 5-monophosphate (CMP). The chain is 2-C-methyl-D-erythritol 2,4-cyclodiphosphate synthase from Nitrosomonas eutropha (strain DSM 101675 / C91 / Nm57).